Reading from the N-terminus, the 766-residue chain is Subtilisin-like protease SBT3.13 (766 aa).

A signal peptide spans 1–21 (MNNSLQSSKLVLLLAIALVLF). The propeptide at 22 to 120 (LNTELDFLTA…VIPNRIRKLK (99 aa)) is activation peptide. One can recognise an Inhibitor I9 domain in the interval 41–119 (VYIVYLGERE…HVIPNRIRKL (79 aa)). Residues 134–618 (PTSFSSLSSV…GGLVNPEKAA (485 aa)) form the Peptidase S8 domain. Catalysis depends on Asp162, which acts as the Charge relay system. Asn195 and Asn223 each carry an N-linked (GlcNAc...) asparagine glycan. The active-site Charge relay system is the His239. N-linked (GlcNAc...) asparagine glycosylation is found at Asn254 and Asn389. Catalysis depends on Ser549, which acts as the Charge relay system. Asn641 carries an N-linked (GlcNAc...) asparagine glycan.

Belongs to the peptidase S8 family.

The protein resides in the secreted. The sequence is that of Subtilisin-like protease SBT3.13 from Arabidopsis thaliana (Mouse-ear cress).